We begin with the raw amino-acid sequence, 404 residues long: MASQVQPGQKPKVQPCRYKTGKTLGAGLYSVVKECVHIDTGQYYAAKVINKRLMVGREHMVRNEIAILKQVSTGHQNILTLVDYFETMNNLYLVTDLALGGELFDRICRKGSYYESDAADLVRAILSAVAYLHDHGIVHRDLKPENLLFRTPEDNADLLIADFGLSRIMDEEQLHVLTTTCGTPGYMAPEIFDKSGHGKPVDIWAIGLITYFMLCGYTPFDRETNLEEVQAIATANFSFTPVEYWRGVSQEARDFIKRCLTVNPKKRMTAHQALQHPWINPPYDTTDDLGSGEDLLPNIKKNFNARRTLHKAIDTVRAINKLRENGGLMMDGIMSVDPKPEHVNGSEVVEDRTTPRERENEDAMEIDSRSNARGQTEQQIREQERKVKETVAGLWSRTAPRSER.

The Protein kinase domain maps to 18–279; the sequence is YKTGKTLGAG…AHQALQHPWI (262 aa). ATP contacts are provided by residues 24 to 32 and lysine 47; that span reads LGAGLYSVV. Aspartate 141 acts as the Proton acceptor in catalysis. Threonine 179 bears the Phosphothreonine; by cmkC mark. The interval 279–322 is autoinhibitory domain; sequence INPPYDTTDDLGSGEDLLPNIKKNFNARRTLHKAIDTVRAINKL. The interval 301-323 is calmodulin-binding; that stretch reads KNFNARRTLHKAIDTVRAINKLR. The tract at residues 336–404 is disordered; it reads VDPKPEHVNG…WSRTAPRSER (69 aa). 2 stretches are compositionally biased toward basic and acidic residues: residues 338–370 and 379–389; these read PKPE…DSRS and QIREQERKVKE.

The protein belongs to the protein kinase superfamily. CAMK Ser/Thr protein kinase family. CaMK subfamily. Phosphorylated by cmkC on Thr-179.

The catalysed reaction is L-seryl-[protein] + ATP = O-phospho-L-seryl-[protein] + ADP + H(+). It carries out the reaction L-threonyl-[protein] + ATP = O-phospho-L-threonyl-[protein] + ADP + H(+). With respect to regulation, activated by Ca(2+)/calmodulin. Binding of calmodulin results in conformational change that relieves intrasteric autoinhibition and allows phosphorylation of Thr-179 within the activation loop by cmkC. Functionally, calcium/calmodulin-dependent protein kinase that operates in the calcium-triggered CaMKK-CaMK1 signaling cascade. Required in G1-phase of the cell cycle for proper timing of the initial nuclear division after germination, but not for subsequent mitoses. Required for the normal temporal regulation of nimX activity. The protein is Calcium/calmodulin-dependent protein kinase cmkB of Emericella nidulans (Aspergillus nidulans).